We begin with the raw amino-acid sequence, 350 residues long: Cytosolic Fe-S cluster assembly factor NBP35 (350 aa).

The disordered stretch occupies residues Met1–Gly30. [4Fe-4S] cluster is bound by residues Cys14, Cys28, Cys31, and Cys37. Gly67 to Ser74 is an ATP binding site.

Belongs to the Mrp/NBP35 ATP-binding proteins family. NUBP1/NBP35 subfamily. In terms of assembly, homodimer and homotetramer. Predominantly homodimeric. [4Fe-4S] cluster serves as cofactor.

The protein localises to the cytoplasm. In terms of biological role, component of the cytosolic iron-sulfur (Fe-S) protein assembly (CIA) machinery. Required for maturation of extramitochondrial Fe-S proteins. Functions as a Fe-S scaffold, mediating the de novo assembly of an Fe-S cluster and its transfer to target apoproteins. Essential for embryo development. This is Cytosolic Fe-S cluster assembly factor NBP35 from Arabidopsis thaliana (Mouse-ear cress).